The following is a 417-amino-acid chain: Serine--tRNA ligase (417 aa).

T226 to E228 is an L-serine binding site. Residues R257–E259 and V273 contribute to the ATP site. E280 is an L-serine binding site. E344–S347 is a binding site for ATP. T379 contacts L-serine.

It belongs to the class-II aminoacyl-tRNA synthetase family. Type-1 seryl-tRNA synthetase subfamily. As to quaternary structure, homodimer. The tRNA molecule binds across the dimer.

It is found in the cytoplasm. The enzyme catalyses tRNA(Ser) + L-serine + ATP = L-seryl-tRNA(Ser) + AMP + diphosphate + H(+). It carries out the reaction tRNA(Sec) + L-serine + ATP = L-seryl-tRNA(Sec) + AMP + diphosphate + H(+). It participates in aminoacyl-tRNA biosynthesis; selenocysteinyl-tRNA(Sec) biosynthesis; L-seryl-tRNA(Sec) from L-serine and tRNA(Sec): step 1/1. Functionally, catalyzes the attachment of serine to tRNA(Ser). Is also able to aminoacylate tRNA(Sec) with serine, to form the misacylated tRNA L-seryl-tRNA(Sec), which will be further converted into selenocysteinyl-tRNA(Sec). The polypeptide is Serine--tRNA ligase (Mycobacterium sp. (strain JLS)).